The primary structure comprises 716 residues: Zinc finger CCCH domain-containing protein 30 (716 aa).

ANK repeat units follow at residues 90–120 and 125–157; these read DYRTPLMVAATYGSIDVIKLIVSLTDADVNR and DQTTALHCAASGGAVNAIQVVKLLLAAGADLNL. Positions 201–231 are disordered; the sequence is VTNVPNRSSSPCHSPTGENGGSGSGSPLGSP. Polar residues predominate over residues 203–213; sequence NVPNRSSSPCH. 2 C3H1-type zinc fingers span residues 306-328 and 336-360; these read PCPDFRKGACRRGDMCEYAHGVF and QYRTRLCKDGTGCARRVCFFAHTPE. Residues 521 to 562 form a disordered region; it reads FQQQQQQQQSMLSPINTSFSSPKSVDHSLFSGGGRMSPRNVV. Polar residues predominate over residues 530–543; that stretch reads SMLSPINTSFSSPK. Ser566 bears the Phosphoserine mark. The span at 583-594 shows a compositional bias: low complexity; sequence QQQQQQQQQQHQ. Disordered regions lie at residues 583–638 and 667–692; these read QQQQ…MSSE and PAEAKEKAATSSSGEHVMKQPNPVEP. The segment covering 605–630 has biased composition (polar residues); sequence TNSSPIVGSPVNNNTWSSKWGSSNGQ.

This Arabidopsis thaliana (Mouse-ear cress) protein is Zinc finger CCCH domain-containing protein 30.